We begin with the raw amino-acid sequence, 237 residues long: MVLQYPQNKILVLSDHPHNFLKTQFLQDLFHCSSTGISIVKDQTWENRYYKVHFDLYIDSCKEIPVWVEEFITPECEPLRNVMAGIILITDIRQTKPQELLHQFMIAAHRNTFVVLANVNEEVEQDEIDELNEIWSNAFTNVIEFVNWKRSKPTVNHNDYGEKLGLDRIQEIIDTHDWLNCEVQPATKIREEIPNEMPLEQIIRNLQSARLKYKSIENSSEADAFANEMADELSRYL.

This sequence belongs to the IRC6 family.

In terms of biological role, involved in gross chromosomal rearrangements (GCRs) and telomere healing. In Saccharomyces cerevisiae (strain ATCC 204508 / S288c) (Baker's yeast), this protein is Increased recombination centers protein 6 (IRC6).